A 227-amino-acid chain; its full sequence is Uracil-DNA glycosylase (227 aa).

Catalysis depends on aspartate 64, which acts as the Proton acceptor.

It belongs to the uracil-DNA glycosylase (UDG) superfamily. UNG family.

Its subcellular location is the cytoplasm. It carries out the reaction Hydrolyzes single-stranded DNA or mismatched double-stranded DNA and polynucleotides, releasing free uracil.. Excises uracil residues from the DNA which can arise as a result of misincorporation of dUMP residues by DNA polymerase or due to deamination of cytosine. The polypeptide is Uracil-DNA glycosylase (Alkaliphilus metalliredigens (strain QYMF)).